The chain runs to 123 residues: Ribosome-binding factor A (123 aa).

It belongs to the RbfA family. In terms of assembly, monomer. Binds 30S ribosomal subunits, but not 50S ribosomal subunits or 70S ribosomes.

It localises to the cytoplasm. One of several proteins that assist in the late maturation steps of the functional core of the 30S ribosomal subunit. Associates with free 30S ribosomal subunits (but not with 30S subunits that are part of 70S ribosomes or polysomes). Required for efficient processing of 16S rRNA. May interact with the 5'-terminal helix region of 16S rRNA. The sequence is that of Ribosome-binding factor A from Neisseria gonorrhoeae (strain ATCC 700825 / FA 1090).